The primary structure comprises 762 residues: Phosphoribosylformylglycinamidine synthase subunit PurL (762 aa).

His-58 is a catalytic residue. Positions 61 and 105 each coordinate ATP. Glu-107 is a Mg(2+) binding site. Residues 108 to 111 (SHNH) and Arg-130 contribute to the substrate site. The Proton acceptor role is filled by His-109. Mg(2+) is bound at residue Asp-131. Gln-255 contributes to the substrate binding site. Asp-283 serves as a coordination point for Mg(2+). 327 to 329 (ESQ) lines the substrate pocket. ATP-binding residues include Asn-513 and Gly-550. Residue Asn-551 participates in Mg(2+) binding. Ser-553 contacts substrate.

The protein belongs to the FGAMS family. In terms of assembly, monomer. Part of the FGAM synthase complex composed of 1 PurL, 1 PurQ and 2 PurS subunits.

It localises to the cytoplasm. It catalyses the reaction N(2)-formyl-N(1)-(5-phospho-beta-D-ribosyl)glycinamide + L-glutamine + ATP + H2O = 2-formamido-N(1)-(5-O-phospho-beta-D-ribosyl)acetamidine + L-glutamate + ADP + phosphate + H(+). It participates in purine metabolism; IMP biosynthesis via de novo pathway; 5-amino-1-(5-phospho-D-ribosyl)imidazole from N(2)-formyl-N(1)-(5-phospho-D-ribosyl)glycinamide: step 1/2. Functionally, part of the phosphoribosylformylglycinamidine synthase complex involved in the purines biosynthetic pathway. Catalyzes the ATP-dependent conversion of formylglycinamide ribonucleotide (FGAR) and glutamine to yield formylglycinamidine ribonucleotide (FGAM) and glutamate. The FGAM synthase complex is composed of three subunits. PurQ produces an ammonia molecule by converting glutamine to glutamate. PurL transfers the ammonia molecule to FGAR to form FGAM in an ATP-dependent manner. PurS interacts with PurQ and PurL and is thought to assist in the transfer of the ammonia molecule from PurQ to PurL. This chain is Phosphoribosylformylglycinamidine synthase subunit PurL, found in Corynebacterium glutamicum (strain R).